We begin with the raw amino-acid sequence, 256 residues long: DNA repair protein RecO (256 aa).

The protein belongs to the RecO family.

Involved in DNA repair and RecF pathway recombination. This is DNA repair protein RecO from Desulforamulus reducens (strain ATCC BAA-1160 / DSM 100696 / MI-1) (Desulfotomaculum reducens).